A 379-amino-acid polypeptide reads, in one-letter code: MKILRKNHPLLKIINHSFIDLPTPSNISSWWNFGSLLGMCLVIQILTGLFLAMHYTSDTTTAFSSVAHICRDVNYGWLIRYLHANGASMFFICLFIHVGRGIYYGSYVLSETWNIGIILFLTTMATAFVGYVLPWGQMSFWGATVITNLLSAIPYIGTTLVEWIWGGFSVDKATLTRFFAFHFILPFIIAAFALVHLLFLHETGSNNPSGLNSDSDKIPFHPYYTIKDLLGIFLLLLVLMILTLFFPDILGDPDNFTPANPLNTPAHIKPEWYFLFAYAILRSIPNKLGGVLALILSILILAAFPLLNTSKQYGLIFRPVTQVIYWIFIANLLVLTWIGGQPVEYPFTMIGQIASITYFAIIIILIPVSNTIENNIIKL.

4 consecutive transmembrane segments (helical) span residues 33–53 (FGSL…FLAM), 77–98 (WLIR…FIHV), 113–133 (WNIG…GYVL), and 178–198 (FFAF…VHLL). Heme b is bound by residues H83 and H97. Heme b contacts are provided by H182 and H196. Position 201 (H201) interacts with a ubiquinone. Transmembrane regions (helical) follow at residues 226–246 (IKDL…TLFF), 288–308 (LGGV…PLLN), 320–340 (VTQV…WIGG), and 347–367 (FTMI…ILIP).

Belongs to the cytochrome b family. In terms of assembly, the cytochrome bc1 complex contains 11 subunits: 3 respiratory subunits (MT-CYB, CYC1 and UQCRFS1), 2 core proteins (UQCRC1 and UQCRC2) and 6 low-molecular weight proteins (UQCRH/QCR6, UQCRB/QCR7, UQCRQ/QCR8, UQCR10/QCR9, UQCR11/QCR10 and a cleavage product of UQCRFS1). This cytochrome bc1 complex then forms a dimer. It depends on heme b as a cofactor.

The protein resides in the mitochondrion inner membrane. Component of the ubiquinol-cytochrome c reductase complex (complex III or cytochrome b-c1 complex) that is part of the mitochondrial respiratory chain. The b-c1 complex mediates electron transfer from ubiquinol to cytochrome c. Contributes to the generation of a proton gradient across the mitochondrial membrane that is then used for ATP synthesis. The protein is Cytochrome b (MT-CYB) of Akodon subfuscus (Puno grass mouse).